We begin with the raw amino-acid sequence, 75 residues long: MAAKPFFRRRKVCPFSGDNAPKIDYKDTRLLQRYISERGKIVPSRITAVSAKKQRELARAIKRARFLALLPYAVK.

This sequence belongs to the bacterial ribosomal protein bS18 family. In terms of assembly, part of the 30S ribosomal subunit. Forms a tight heterodimer with protein bS6.

In terms of biological role, binds as a heterodimer with protein bS6 to the central domain of the 16S rRNA, where it helps stabilize the platform of the 30S subunit. The protein is Small ribosomal subunit protein bS18 of Dinoroseobacter shibae (strain DSM 16493 / NCIMB 14021 / DFL 12).